Consider the following 228-residue polypeptide: Cytochrome c oxidase subunit 2 (228 aa).

Residues 1 to 26 (MSTWANLGLQDSASPLMEQLIFFHDH) are Mitochondrial intermembrane-facing. A helical transmembrane segment spans residues 27–48 (ALLILVMITVLVGYLMFMLFFN). The Mitochondrial matrix portion of the chain corresponds to 49–62 (NYVNRFLLHGQLIE). Residues 63-82 (MIWTILPAIILLFIALPSLR) traverse the membrane as a helical segment. Over 83-228 (LLYLLDEINE…FIKWISSNNS (146 aa)) the chain is Mitochondrial intermembrane. His-161, Cys-196, Glu-198, Cys-200, His-204, and Met-207 together coordinate Cu cation. Mg(2+) is bound at residue Glu-198.

This sequence belongs to the cytochrome c oxidase subunit 2 family. Component of the cytochrome c oxidase (complex IV, CIV), a multisubunit enzyme composed of a catalytic core of 3 subunits and several supernumerary subunits. The complex exists as a monomer or a dimer and forms supercomplexes (SCs) in the inner mitochondrial membrane with ubiquinol-cytochrome c oxidoreductase (cytochrome b-c1 complex, complex III, CIII). Requires Cu cation as cofactor.

It is found in the mitochondrion inner membrane. It catalyses the reaction 4 Fe(II)-[cytochrome c] + O2 + 8 H(+)(in) = 4 Fe(III)-[cytochrome c] + 2 H2O + 4 H(+)(out). In terms of biological role, component of the cytochrome c oxidase, the last enzyme in the mitochondrial electron transport chain which drives oxidative phosphorylation. The respiratory chain contains 3 multisubunit complexes succinate dehydrogenase (complex II, CII), ubiquinol-cytochrome c oxidoreductase (cytochrome b-c1 complex, complex III, CIII) and cytochrome c oxidase (complex IV, CIV), that cooperate to transfer electrons derived from NADH and succinate to molecular oxygen, creating an electrochemical gradient over the inner membrane that drives transmembrane transport and the ATP synthase. Cytochrome c oxidase is the component of the respiratory chain that catalyzes the reduction of oxygen to water. Electrons originating from reduced cytochrome c in the intermembrane space (IMS) are transferred via the dinuclear copper A center (CU(A)) of subunit 2 and heme A of subunit 1 to the active site in subunit 1, a binuclear center (BNC) formed by heme A3 and copper B (CU(B)). The BNC reduces molecular oxygen to 2 water molecules using 4 electrons from cytochrome c in the IMS and 4 protons from the mitochondrial matrix. This Drosophila yakuba (Fruit fly) protein is Cytochrome c oxidase subunit 2 (mt:CoII).